A 398-amino-acid polypeptide reads, in one-letter code: Transcription termination factor 1, mitochondrial (398 aa).

The transit peptide at 1–57 directs the protein to the mitochondrion; the sequence is MQSLSLGQTSISKGLNYLTIMAPGNLWHMRNNFLFGSRCWMTRFSAENIFKSVSFRL. Interaction with DNA regions lie at residues 169 to 170, 246 to 250, 323 to 330, 354 to 357, and 383 to 390; these read RS, QSTKR, AEKKFNDK, SIST, and SKKRYEAK.

It belongs to the mTERF family. In terms of assembly, monomer. Phosphoprotein with mostly four phosphate groups. While the DNA-binding activity is unaffected by the phosphorylation state, only the phosphorylated form of the protein is active for termination activity. Functioning seems to be regulated by phosphorylation.

The protein localises to the mitochondrion. Its function is as follows. Transcription termination factor. Binds to a 28 bp region within the tRNA(Leu(uur)) gene at a position immediately adjacent to and downstream of the 16S rRNA gene; this region comprises a tridecamer sequence critical for directing accurate termination. Binds DNA along the major grove and promotes DNA bending and partial unwinding. Promotes base flipping. Transcription termination activity appears to be polarized with highest specificity for transcripts initiated on the light strand. This Pongo abelii (Sumatran orangutan) protein is Transcription termination factor 1, mitochondrial (MTERF1).